Consider the following 33-residue polypeptide: Alpha-amanitin proprotein 2 (33 aa).

Positions M1–P10 are excised as a propeptide. Residue I11 is modified to (3R,4R)-4,5-dihydroxyisoleucine; in form alpha-amanitin. I11 carries the post-translational modification (3R,4S)-4-hydroxyisoleucine; in form gamma-amanitin. The segment at residues I11 to P18 is a cross-link (cyclopeptide (Ile-Pro)). Residues W12–C16 constitute a cross-link (2'-cysteinyl-6'-hydroxytryptophan sulfoxide (Trp-Cys)). P18 is subject to 4-hydroxyproline. The propeptide occupies C19–A33.

This sequence belongs to the MSDIN fungal toxin family. Post-translationally, processed by the macrocyclase-peptidase enzyme POPB to yield a toxic cyclic octapeptide. POPB first removes 10 residues from the N-terminus. Conformational trapping of the remaining peptide forces the enzyme to release this intermediate rather than proceed to macrocyclization. The enzyme rebinds the remaining peptide in a different conformation and catalyzes macrocyclization of the N-terminal 8 residues. Expressed in basidiocarps.

In terms of biological role, major toxin belonging to the bicyclic octapeptides amatoxins that acts by binding non-competitively to RNA polymerase II and greatly slowing the elongation of transcripts from target promoters. The chain is Alpha-amanitin proprotein 2 from Amanita exitialis (Guangzhou destroying angel).